Here is a 221-residue protein sequence, read N- to C-terminus: GTP-binding nuclear protein Ran-A1 (221 aa).

The Small GTPase Ran-type domain occupies 10 to 174; the sequence is DYPSFKLVIV…LYLARKLAGD (165 aa). 21 to 28 contacts GTP; that stretch reads DGGTGKTT. A switch-I region spans residues 40-48; it reads KKYEPTIGV. Residues Gly-71, 125 to 128, and 153 to 155 each bind GTP; these read NKVD and SAK. The interval 71–87 is switch-II; sequence GQEKFGGLRDGYYIHGQ. The segment covering 199-208 has biased composition (low complexity); the sequence is QHEAELAAAA. A disordered region spans residues 199-221; it reads QHEAELAAAASQPLPDDDDETFD.

It belongs to the small GTPase superfamily. Ran family. Found in a nuclear export complex with RanGTP, exportin and pre-miRNA.

It localises to the nucleus. GTP-binding protein involved in nucleocytoplasmic transport. Required for the import of protein into the nucleus and also for RNA export. Involved in chromatin condensation and control of cell cycle. In Nicotiana tabacum (Common tobacco), this protein is GTP-binding nuclear protein Ran-A1 (RAN-A1).